We begin with the raw amino-acid sequence, 339 residues long: GATA transcription factor 5 (339 aa).

Disordered regions lie at residues 68-88 (MVRVSSEEPNDDGDALRRSSD), 126-145 (EYSGPNLTGTPTEKPAWLTG), 163-206 (PVPA…PSSP), and 221-242 (ERPPFPKKHKKRSAESVFSGEL). A compositionally biased stretch (polar residues) spans 126–136 (EYSGPNLTGTP). The short motif at 167–174 (KARSKRNR) is the Nuclear localization signal element. Residues 181–206 (SLGSSSSSGPSSSGSTSSSSSGPSSP) are compositionally biased toward low complexity. Residues 245 to 299 (LQPQRKCSHCGVQKTPQWRAGPMGAKTLCNACGVRYKSGRLLPEYRPACSPTFSS) form a GATA-type zinc finger. A disordered region spans residues 314 to 339 (RKKEPTSDNETGLNQLVQSPQAVPSF). Residues 321–339 (DNETGLNQLVQSPQAVPSF) are compositionally biased toward polar residues.

The protein belongs to the type IV zinc-finger family. Class A subfamily.

It localises to the nucleus. Its function is as follows. Transcriptional activator that specifically binds 5'-GATA-3' or 5'-GAT-3' motifs within gene promoters. May be involved in the regulation of some light-responsive genes. The protein is GATA transcription factor 5 (GATA5) of Arabidopsis thaliana (Mouse-ear cress).